Consider the following 266-residue polypeptide: MKGVAWILSVGNELLIGRVVNTNAAWLASKLTFLGYSVRRIVVVPDEENDIVEAFREAINRADVVILTGGLGPTPDDITNLAFCKALGVEAVVNDEALKMVRGKYESRGYALTPERIKMAMMPPGATPLPNPVGTAPGILYESGGKLVVLLPGVPKEMEAIFENHVEPLLKSRGPPVYFSEREVVVRGVPEADIAPVIREVMRLDKRVYVKSHPRGFEVNAPLLHIHIYASAGSKEEAEALVSKASDRLIELIKLKYGDRASISTG.

This sequence belongs to the CinA family.

The protein is Protein PAE0875 of Pyrobaculum aerophilum (strain ATCC 51768 / DSM 7523 / JCM 9630 / CIP 104966 / NBRC 100827 / IM2).